We begin with the raw amino-acid sequence, 151 residues long: Small ribosomal subunit protein uS13m (151 aa).

The protein belongs to the universal ribosomal protein uS13 family. As to quaternary structure, component of the mitochondrial small ribosomal subunit (mt-SSU). Mature yeast 74S mitochondrial ribosomes consist of a small (37S) and a large (54S) subunit. The 37S small subunit contains a 15S ribosomal RNA (15S mt-rRNA) and at least 32 different proteins. The 54S large subunit contains a 21S rRNA (21S mt-rRNA) and at least 45 different proteins.

It is found in the mitochondrion. In terms of biological role, component of the mitochondrial ribosome (mitoribosome), a dedicated translation machinery responsible for the synthesis of mitochondrial genome-encoded proteins, including at least some of the essential transmembrane subunits of the mitochondrial respiratory chain. The mitoribosomes are attached to the mitochondrial inner membrane and translation products are cotranslationally integrated into the membrane. This chain is Small ribosomal subunit protein uS13m (sws2), found in Schizosaccharomyces pombe (strain 972 / ATCC 24843) (Fission yeast).